Here is a 739-residue protein sequence, read N- to C-terminus: Catalase-peroxidase (739 aa).

Residues Met1–Gly33 are disordered. The tryptophyl-tyrosyl-methioninium (Trp-Tyr) (with M-255) cross-link spans Trp106–Tyr229. Residue His107 is the Proton acceptor of the active site. The interval Arg113–Trp134 is disordered. A cross-link (tryptophyl-tyrosyl-methioninium (Tyr-Met) (with W-106)) is located at residues Tyr229–Met255. His270 provides a ligand contact to heme b.

Belongs to the peroxidase family. Peroxidase/catalase subfamily. As to quaternary structure, homodimer or homotetramer. Requires heme b as cofactor. In terms of processing, formation of the three residue Trp-Tyr-Met cross-link is important for the catalase, but not the peroxidase activity of the enzyme.

It catalyses the reaction H2O2 + AH2 = A + 2 H2O. It carries out the reaction 2 H2O2 = O2 + 2 H2O. Functionally, bifunctional enzyme with both catalase and broad-spectrum peroxidase activity. This chain is Catalase-peroxidase, found in Nocardia farcinica (strain IFM 10152).